The primary structure comprises 102 residues: MDKVVRMSSEKGVVIFSKSSCCMSYAVQVLFQDLGVHPTVHEIDKDPECREIEKALMRLGCSTPVPAIFVGGKLIGSTNEVMSLHLSGSLVPLVKPFQANLC.

The Glutaredoxin domain occupies M1–L101. Residue C21 coordinates [2Fe-2S] cluster.

This sequence belongs to the glutaredoxin family. CC-type subfamily.

Its subcellular location is the cytoplasm. May only reduce GSH-thiol disulfides, but not protein disulfides. In Arabidopsis thaliana (Mouse-ear cress), this protein is Monothiol glutaredoxin-S9 (GRXS9).